The following is a 172-amino-acid chain: MASDEGKLFVGGLSFDTNEQSLEQVFSKYGQISEVVVVKDRETQRSRGFGFVTFENIDDAKDAMMAMNGKSVDGRQIRVDQAGKSSDNRSRGYRGGSAGGRGFFRGGRGRGRGFSRGGGDRGYGGNRFESRSGGYGGSRDYYSSRSQSGGYSDRSSGGSYRDSYDSYATHNE.

Residues 6 to 84 (GKLFVGGLSF…RQIRVDQAGK (79 aa)) enclose the RRM domain. Residues 69-172 (GKSVDGRQIR…SYDSYATHNE (104 aa)) form a disordered region. Composition is skewed to gly residues over residues 93 to 106 (YRGG…FFRG) and 114 to 125 (FSRGGGDRGYGG). Residues Ser130, Ser138, Ser146, Ser156, Ser159, and Ser163 each carry the phosphoserine modification. The span at 138–172 (SRDYYSSRSQSGGYSDRSSGGSYRDSYDSYATHNE) shows a compositional bias: low complexity.

As to quaternary structure, interacts with EIF4G1. Associates with ribosomes. Methylated on arginine residues. Methylation of the RGG motifs is a prerequisite for recruitment into SGs. In terms of processing, phosphorylated by CK2, GSK3A and GSK3B. Phosphorylation by GSK3B increases RNA-binding activity to the TXN 3'-UTR transcript upon exposure to UV radiation.

The protein resides in the nucleus. The protein localises to the nucleoplasm. It localises to the cytoplasm. Functionally, cold-inducible mRNA binding protein that plays a protective role in the genotoxic stress response by stabilizing transcripts of genes involved in cell survival. Acts as a translational activator. Seems to play an essential role in cold-induced suppression of cell proliferation. Binds specifically to the 3'-untranslated regions (3'-UTRs) of stress-responsive transcripts RPA2 and TXN. Acts as a translational repressor. Promotes assembly of stress granules (SGs), when overexpressed. This is Cold-inducible RNA-binding protein (CIRBP) from Pongo abelii (Sumatran orangutan).